Consider the following 187-residue polypeptide: Flavin prenyltransferase UbiX (187 aa).

Residues 9 to 11 (GAS), serine 34, and arginine 123 each bind FMN. Dimethylallyl phosphate is bound by residues tyrosine 153 and lysine 169.

This sequence belongs to the UbiX/PAD1 family.

It carries out the reaction dimethylallyl phosphate + FMNH2 = prenylated FMNH2 + phosphate. Flavin prenyltransferase that catalyzes the synthesis of the prenylated FMN cofactor (prenyl-FMN) for 4-hydroxy-3-polyprenylbenzoic acid decarboxylase UbiD. The prenyltransferase is metal-independent and links a dimethylallyl moiety from dimethylallyl monophosphate (DMAP) to the flavin N5 and C6 atoms of FMN. This Helicobacter pylori (strain ATCC 700392 / 26695) (Campylobacter pylori) protein is Flavin prenyltransferase UbiX.